Reading from the N-terminus, the 763-residue chain is 5-methyltetrahydropteroyltriglutamate--homocysteine methyltransferase (763 aa).

Residues 16–19 (RELK) and K117 contribute to the 5-methyltetrahydropteroyltri-L-glutamate site. Residues 440-442 (IGS) and E493 contribute to the L-homocysteine site. Residues 440-442 (IGS) and E493 contribute to the L-methionine site. 5-methyltetrahydropteroyltri-L-glutamate is bound by residues 524 to 525 (RC) and W570. Residue D608 participates in L-homocysteine binding. D608 is an L-methionine binding site. A 5-methyltetrahydropteroyltri-L-glutamate-binding site is contributed by E614. 3 residues coordinate Zn(2+): H650, C652, and E674. The active-site Proton donor is H703. C735 contacts Zn(2+).

The protein belongs to the vitamin-B12 independent methionine synthase family. Zn(2+) is required as a cofactor.

It carries out the reaction 5-methyltetrahydropteroyltri-L-glutamate + L-homocysteine = tetrahydropteroyltri-L-glutamate + L-methionine. Its pathway is amino-acid biosynthesis; L-methionine biosynthesis via de novo pathway; L-methionine from L-homocysteine (MetE route): step 1/1. Catalyzes the transfer of a methyl group from 5-methyltetrahydrofolate to homocysteine resulting in methionine formation. The protein is 5-methyltetrahydropteroyltriglutamate--homocysteine methyltransferase of Alcanivorax borkumensis (strain ATCC 700651 / DSM 11573 / NCIMB 13689 / SK2).